A 110-amino-acid polypeptide reads, in one-letter code: Quaternary ammonium compound-resistance protein QacF (110 aa).

Helical transmembrane passes span 1-21, 31-51, 58-78, and 85-105; these read MKNW…TSAL, VPSV…SLAL, IAYA…AWIF, and FWAF…NLLS.

The protein belongs to the drug/metabolite transporter (DMT) superfamily. Small multidrug resistance (SMR) (TC 2.A.7.1) family.

It localises to the cell membrane. Functionally, multidrug exporter. Is implicated for the resistance to bacteriocidal quaternary ammonium compounds. The protein is Quaternary ammonium compound-resistance protein QacF (qacF) of Klebsiella aerogenes (Enterobacter aerogenes).